The primary structure comprises 127 residues: PanD regulatory factor (127 aa).

In terms of domain architecture, N-acetyltransferase spans 1–127 (MKLTILRLEH…TAQHDGWEKR (127 aa)). CoA contacts are provided by residues 66–68 (LRV) and 72–79 (TRRRGVGQ).

Belongs to the PanZ/PanM family. In terms of assembly, interacts with PanD in the presence of CoA. Monomer.

Functionally, controls both the activation and catalytic activity of PanD in a coenzyme A (CoA)-dependent fashion. Binding of CoA or a derivative to PanM leads to interaction with PanD, which promotes the processing and activation of pro-PanD, and subsequent substrate-mediated inhibition of the active form of PanD. Lacks acetyltransferase activity. In Salmonella typhimurium (strain LT2 / SGSC1412 / ATCC 700720), this protein is PanD regulatory factor.